The sequence spans 346 residues: Prepilin peptidase EppA (346 aa).

Transmembrane regions (helical) follow at residues 1–21 (MFGF…LILT), 31–51 (IIPH…GYYF), 56–76 (AITS…GMGG), 77–97 (GDVK…IYFV), 101–121 (ISIL…TKIL), 128–148 (IIPS…ITEI), 149–169 (YSIG…IFIS), 182–202 (LGYI…AYFV), 206–226 (VLIS…VIYA), and 321–341 (PFVP…MGVI).

Belongs to the peptidase A24 family.

It localises to the cell membrane. Peptidase that processes the N-terminus of prepilins. Specifically cleaves proteins with a class III (type IV pilin-like) signal sequence, such as the major structural pilin EpdE and the minor pilins EpdA, EpdC and EpdD. Is not able to cleave the preflagellin subunit FlaB2. The chain is Prepilin peptidase EppA from Methanococcus maripaludis (strain DSM 14266 / JCM 13030 / NBRC 101832 / S2 / LL).